A 311-amino-acid chain; its full sequence is GTPase Era (311 aa).

Positions 18–185 (RSGFVALIGA…AKYLAESVPN (168 aa)) constitute an Era-type G domain. A G1 region spans residues 26 to 33 (GAPNAGKS). Residue 26–33 (GAPNAGKS) coordinates GTP. Residues 52–56 (QTTRA) are G2. Residues 73-76 (DTPG) are G3. GTP is bound by residues 73 to 77 (DTPGI) and 135 to 138 (NKVD). The segment at 135 to 138 (NKVD) is G4. A G5 region spans residues 164–166 (ISA). One can recognise a KH type-2 domain in the interval 216-293 (LHEELPYAST…HLFLFVKVRE (78 aa)).

Belongs to the TRAFAC class TrmE-Era-EngA-EngB-Septin-like GTPase superfamily. Era GTPase family. Monomer.

The protein localises to the cytoplasm. It localises to the cell inner membrane. An essential GTPase that binds both GDP and GTP, with rapid nucleotide exchange. Plays a role in 16S rRNA processing and 30S ribosomal subunit biogenesis and possibly also in cell cycle regulation and energy metabolism. The polypeptide is GTPase Era (Brucella suis biovar 1 (strain 1330)).